Consider the following 1331-residue polypeptide: Contactin-associated protein-like 2 (1331 aa).

Positions 1 to 27 are cleaved as a signal peptide; that stretch reads MQAAPRAGCGAALLLWIVSSCLCRAWT. The Extracellular segment spans residues 28–1262; the sequence is APSTSQKCDE…IRNGVNRNSA (1235 aa). Positions 35 to 181 constitute an F5/8 type C domain; the sequence is CDEPLVSGLP…IGLRIEVYGC (147 aa). Residues Cys-35 and Cys-181 are joined by a disulfide bond. In terms of domain architecture, Laminin G-like 1 spans 216–368; that stretch reads FKTSESEGVI…SNVGNLSFSC (153 aa). 8 N-linked (GlcNAc...) asparagine glycosylation sites follow: Asn-289, Asn-346, Asn-363, Asn-379, Asn-436, Asn-506, Asn-507, and Asn-546. Residues Cys-336 and Cys-368 are joined by a disulfide bond. The Laminin G-like 2 domain occupies 401-552; that stretch reads FRTWNPNGLL…SFANVSIDMC (152 aa). 4 cysteine pairs are disulfide-bonded: Cys-520-Cys-552, Cys-558-Cys-569, Cys-563-Cys-578, and Cys-580-Cys-590. The 38-residue stretch at 554 to 591 folds into the EGF-like 1 domain; that stretch reads IIDRCVPNHCEHGGKCSQTWDSFKCTCDETGYSGATCH. In terms of domain architecture, Fibrinogen C-terminal spans 592 to 798; that stretch reads NSIYEPSCEA…LRCQGDRNYW (207 aa). N-linked (GlcNAc...) asparagine glycosylation is found at Asn-630 and Asn-735. A Laminin G-like 3 domain is found at 799-963; sequence NAASFPNPSS…KVTSGFISGC (165 aa). 4 disulfide bridges follow: Cys-936-Cys-963, Cys-967-Cys-980, Cys-974-Cys-989, and Cys-991-Cys-1001. The 40-residue stretch at 963 to 1002 folds into the EGF-like 2 domain; sequence CSGHCTSYGTNCENGGKCLERYHGYSCDCSNTAYDGTFCN. A disordered region spans residues 1026–1045; sequence ARDSSSRVDNAPDQQNSHPD. The Laminin G-like 4 domain maps to 1055-1214; that stretch reads FSTTKAPCIL…IQGELVESNC (160 aa). Asn-1116 and Asn-1198 each carry an N-linked (GlcNAc...) asparagine glycan. Cys-1178 and Cys-1214 are oxidised to a cystine. A helical membrane pass occupies residues 1263 to 1283; that stretch reads IIGGVIAVVIFTILCTLVFLI. The Cytoplasmic portion of the chain corresponds to 1284–1331; sequence RYMFRHKGTYHTNEAKGAESAESADAAIMNNDPNFTETIDESKKEWLI. Residues Ser-1303 and Ser-1306 each carry the phosphoserine modification.

This sequence belongs to the neurexin family. Interacts (via C-terminus) with KCNA2. Interacts with GPR37. As to expression, predominantly expressed in nervous system.

It is found in the membrane. The protein resides in the cell projection. Its subcellular location is the axon. The protein localises to the cell junction. It localises to the paranodal septate junction. In terms of biological role, required for gap junction formation. Required, with CNTNAP1, for radial and longitudinal organization of myelinated axons. Plays a role in the formation of functional distinct domains critical for saltatory conduction of nerve impulses in myelinated nerve fibers. Demarcates the juxtaparanodal region of the axo-glial junction. In Homo sapiens (Human), this protein is Contactin-associated protein-like 2 (CNTNAP2).